A 147-amino-acid polypeptide reads, in one-letter code: Hemoglobin subunit beta (147 aa).

Residues 3 to 147 (HWSCEEKQFI…VAHALALGYH (145 aa)) form the Globin domain. The heme b site is built by His-64 and His-93.

This sequence belongs to the globin family. As to quaternary structure, heterotetramer of two alpha-D chains and two beta chains. Red blood cells.

Its function is as follows. Involved in oxygen transport from the lung to the various peripheral tissues. This Chelonoidis carbonarius (Red-footed tortoise) protein is Hemoglobin subunit beta (HBB).